A 214-amino-acid chain; its full sequence is MENTDQNIEITAETSAAAENTESTSLVPIDEYLAAGVHIGTQQKTQNMMKFVYRVRTDGLYVLDIQSTDERIRSIAHFLSMYDPSRILVVSARQYGQYPATMFSKSVGAVSKVGRFIPGSLTNPVQEGFFEPDVVIVTDPAGDAQVIREAVNVGIPVVALCDTNNMTSNVDLVIPTNNKGRKALSLVYWLLAREIANERDIPFNYEASEFETGL.

The protein belongs to the universal ribosomal protein uS2 family.

The polypeptide is Small ribosomal subunit protein uS2 (Methanococcoides burtonii (strain DSM 6242 / NBRC 107633 / OCM 468 / ACE-M)).